Here is a 2173-residue protein sequence, read N- to C-terminus: Mediator of DNA damage checkpoint protein 1 (2173 aa).

A compositionally biased stretch (acidic residues) spans 1–19 (MEDTQAIDWDVEEEEETEQ). Residues 1–22 (MEDTQAIDWDVEEEEETEQSSE) form a disordered region. Residues 1-150 (MEDTQAIDWD…SRGPLTVEET (150 aa)) form an interaction with CHEK2 region. The segment at 2–222 (EDTQAIDWDV…PFAFNLNSDT (221 aa)) is interaction with the MRN complex. T4 carries the phosphothreonine modification. In terms of domain architecture, FHA spans 54–105 (NVVGRMPDCSVALPFPSISKQHAEIEILAWDKAPILRDCGSLNGTQILRPPK). The residue at position 108 (S108) is a Phosphoserine. Residues 145–570 (LTVEETPRVQ…PAKLLVVSLE (426 aa)) are required for nuclear localization (NLS1). A Phosphothreonine modification is found at T146. Phosphoserine occurs at positions 168, 176, 198, and 220. Residues 198–320 (SDEEGHSPVL…PPGRPAEVHL (123 aa)) form a disordered region. T222 is modified (phosphothreonine). Positions 227 to 244 (GQQSATEEASSAARRGAT) are enriched in low complexity. Residues 259-276 (QLEKDQPSVKERDNDTKV) show a composition bias toward basic and acidic residues. The residue at position 301 (S301) is a Phosphoserine. T303 bears the Phosphothreonine mark. Residues 308-320 (DSRPPGRPAEVHL) show a composition bias toward basic and acidic residues. S331 is modified (phosphoserine). Phosphothreonine is present on T333. Residues 359–383 (GTRGPGAPGLSHLQESQAGSDTDVE) form a disordered region. Residues S374 and S378 each carry the phosphoserine modification. Phosphothreonine is present on T380. Phosphoserine occurs at positions 396, 399, and 404. Residue T406 is modified to Phosphothreonine. S413 carries the phosphoserine modification. The interval 444 to 515 (LQRSQTTTGR…SSPGIHLERS (72 aa)) is disordered. T451 carries the phosphothreonine modification. At S455 the chain carries Phosphoserine. T457 carries the post-translational modification Phosphothreonine. A phosphoserine mark is found at S487, S497, S500, S506, S507, and S515. T525 bears the Phosphothreonine mark. Phosphoserine is present on S592. Residue K618 forms a Glycyl lysine isopeptide (Lys-Gly) (interchain with G-Cter in SUMO1); alternate linkage. A Glycyl lysine isopeptide (Lys-Gly) (interchain with G-Cter in SUMO2); alternate cross-link involves residue K618. Position 631 is a phosphoserine (S631). Disordered regions lie at residues 652 to 697 (VDTD…EDPD) and 773 to 1770 (HLEA…TLRS). Residues 673 to 687 (GREREQHVGRTKDSE) are compositionally biased toward basic and acidic residues. The span at 688–697 (DNCDDSEDPD) shows a compositional bias: acidic residues. Phosphoserine occurs at positions 782 and 795. K814 carries the N6-acetyllysine modification. Basic and acidic residues-rich tracts occupy residues 821 to 846 (ETAE…ERQT), 853 to 864 (ELTRGIQDREQK), 870 to 903 (DTQR…KEIQ), and 916 to 953 (AFER…RGEP). 5 positions are modified to phosphoserine: S957, S1000, S1035, S1070, and S1088. Residues 957–969 (SQDQKGQASSPTS) are compositionally biased toward polar residues. A compositionally biased stretch (basic and acidic residues) spans 1079–1090 (TIRKTGQDRSQE). A compositionally biased stretch (basic residues) spans 1105 to 1115 (PKPKIITRKSS). Over residues 1131 to 1156 (PSTSTAQPVTPKPTSQATRSRTNRSS) the composition is skewed to polar residues. Residues 1150-1694 (SRTNRSSVKT…KNRSSVKTPE (545 aa)) are interaction with the PRKDC complex. Low complexity predominate over residues 1157 to 1169 (VKTPEPVVPTVPE). T1159 is subject to Phosphothreonine. A compositionally biased stretch (polar residues) spans 1171–1189 (QPSTSTDQPVASEPTSQAT). T1200 carries the post-translational modification Phosphothreonine. Phosphoserine is present on S1237. 3 positions are modified to phosphothreonine: T1241, T1282, and T1304. Residues 1280–1292 (VKTPEPVVPTVPE) show a composition bias toward low complexity. Positions 1294–1320 (QPSTSTDQPVTSEPTSQATRGRTNRSS) are enriched in polar residues. A compositionally biased stretch (low complexity) spans 1321-1333 (VKTPEPVVPTVPE). Residues 1335 to 1353 (QPSTSTDQPVASEPTSQAT) are compositionally biased toward polar residues. Low complexity predominate over residues 1390 to 1402 (TSRTTRSRTNMSS). Composition is skewed to polar residues over residues 1418–1434 (PSTS…TYQP), 1456–1487 (KLQS…SVKS), 1499–1527 (QPST…SSVK), and 1540–1559 (QPST…QATR). S1483 and S1484 each carry phosphoserine. K1486 bears the N6-acetyllysine mark. Phosphothreonine occurs at positions 1509 and 1550. Low complexity predominate over residues 1567–1578 (VKTPKIVVPTVP). The segment covering 1581 to 1598 (QASTSTDQPVTSEPTSRT) has biased composition (polar residues). Phosphothreonine is present on residues T1617 and T1632. Over residues 1626 to 1639 (STDQPITPKPTSRA) the composition is skewed to polar residues. Position 1648 is a phosphoserine (S1648). Phosphothreonine occurs at positions 1651 and 1673. Polar residues predominate over residues 1664–1680 (PSTSRSQLVTPEPTSRA). The residue at position 1688 (S1688) is a Phosphoserine. A phosphothreonine mark is found at T1692, T1714, T1748, and T1755. The segment covering 1705 to 1721 (PTTSTDQPVTPKPTSRA) has biased composition (polar residues). The segment covering 1761–1770 (QGSQSKTLRS) has biased composition (polar residues). Position 1765 is a phosphoserine (S1765). T1781 carries the phosphothreonine modification. A required for nuclear localization (NLS2) region spans residues 1782–2173 (PEFQSPVTTD…VLSPLEMSST (392 aa)). A phosphoserine mark is found at S1786 and S1795. The interval 1809–1971 (RATGNPGSLT…NRSLRRTKLN (163 aa)) is disordered. K1824 participates in a covalent cross-link: Glycyl lysine isopeptide (Lys-Gly) (interchain with G-Cter in SUMO2). S1859 is subject to Phosphoserine. K1874 participates in a covalent cross-link: Glycyl lysine isopeptide (Lys-Gly) (interchain with G-Cter in SUMO2). T1884 is subject to Phosphothreonine. S1904 carries the phosphoserine modification. A compositionally biased stretch (polar residues) spans 1907-1920 (HQKQPQRGEVSQKT). A Glycyl lysine isopeptide (Lys-Gly) (interchain with G-Cter in SUMO1); alternate cross-link involves residue K1924. Residue K1924 forms a Glycyl lysine isopeptide (Lys-Gly) (interchain with G-Cter in SUMO2); alternate linkage. Over residues 1931–1941 (AEKPGKEEDVM) the composition is skewed to basic and acidic residues. At T1942 the chain carries Phosphothreonine. BRCT domains are found at residues 1976–2054 (APKV…EYVV) and 2075–2166 (RERR…FVLS). Residue R2027 is modified to Omega-N-methylarginine.

Homodimer. Interacts with H2AX, which requires phosphorylation of H2AX on 'Ser-139'. Interacts with the MRN complex, composed of MRE11, RAD50, and NBN. Interacts with CHEK2, which requires ATM-mediated phosphorylation of 'Thr-68' within the FHA domain of CHEK2. Interacts constitutively with the BRCA1-BARD1 complex, SMC1A and TP53BP1. Interacts with ATM and FANCD2, and these interactions are reduced upon DNA damage. Also interacts with the PRKDC complex, composed of XRCC6/KU70, XRCC5/KU80 and PRKDC/XRCC7. This interaction may be required for PRKDC autophosphorylation, which is essential for DNA double strand break (DSB) repair. When phosphorylated by ATM, interacts with RNF8 (via FHA domain). Interacts with CEP164. When phosphorylated, interacts with APTX (via FHA-like domain). Interacts (when phosphorylated) with TOPBP1; promoting TOPBP1 localization to DNA damage sites during mitosis. Interacts (when phosphorylated) with NBN; promoting NBN and MRN complex localization to DNA damage sites. In terms of processing, phosphorylated upon exposure to ionizing radiation (IR), ultraviolet radiation (UV), and hydroxyurea (HU). Phosphorylation in response to IR requires ATM, NBN, and possibly CHEK2. Also phosphorylated during the G2/M phase of the cell cycle and during activation of the mitotic spindle checkpoint. Phosphorylation at Thr-4 by ATM stabilizes and enhances homodimerization via the FHA domain. Phosphorylated at Ser-168 and Ser-198 by CK2 in response to DNA damage during mitosis, promoting interaction with TOPBP1. Phosphorylated by CK2 in response to DNA damage, promoting interaction with NBN and recruitment of the MRN complex to DNA damage sites. Post-translationally, sumoylation at Lys-1924 by PIAS4 following DNA damage promotes ubiquitin-mediated degradation. Ubiquitinated by RNF4, leading to proteasomal degradation; undergoes 'Lys-48'-linked polyubiquitination.

The protein localises to the nucleus. It localises to the chromosome. Functionally, histone reader protein required for checkpoint-mediated cell cycle arrest in response to DNA damage within both the S phase and G2/M phases of the cell cycle. Specifically recognizes and binds histone H2AX phosphorylated at 'Ser-139', a marker of DNA damage, serving as a scaffold for the recruitment of DNA repair and signal transduction proteins to discrete foci of DNA damage sites. Also required for downstream events subsequent to the recruitment of these proteins. These include phosphorylation and activation of the ATM, CHEK1 and CHEK2 kinases, and stabilization of TP53/p53 and apoptosis. ATM and CHEK2 may also be activated independently by a parallel pathway mediated by TP53BP1. Required for chromosomal stability during mitosis by promoting recruitment of TOPBP1 to DNA double strand breaks (DSBs): TOPBP1 forms filamentous assemblies that bridge MDC1 and tether broken chromosomes during mitosis. Required for the repair of DSBs via homologous recombination by promoting recruitment of NBN component of the MRN complex to DSBs. The chain is Mediator of DNA damage checkpoint protein 1 (MDC1) from Macaca mulatta (Rhesus macaque).